A 206-amino-acid polypeptide reads, in one-letter code: Protein-methionine-sulfoxide reductase heme-binding subunit MsrQ (206 aa).

Helical transmembrane passes span 14 to 34, 45 to 65, 82 to 102, 118 to 138, 149 to 169, and 179 to 199; these read IKPL…WLGA, FLTR…LAIT, MCGL…VWWD, PFIT…ATST, WQVL…HFWW, and QPLL…AAWW.

It belongs to the MsrQ family. In terms of assembly, heterodimer of a catalytic subunit (MsrP) and a heme-binding subunit (MsrQ). FMN serves as cofactor. Heme b is required as a cofactor.

The protein localises to the cell inner membrane. Part of the MsrPQ system that repairs oxidized periplasmic proteins containing methionine sulfoxide residues (Met-O), using respiratory chain electrons. Thus protects these proteins from oxidative-stress damage caused by reactive species of oxygen and chlorine generated by the host defense mechanisms. MsrPQ is essential for the maintenance of envelope integrity under bleach stress, rescuing a wide series of structurally unrelated periplasmic proteins from methionine oxidation. MsrQ provides electrons for reduction to the reductase catalytic subunit MsrP, using the quinone pool of the respiratory chain. The chain is Protein-methionine-sulfoxide reductase heme-binding subunit MsrQ from Bordetella bronchiseptica (strain ATCC BAA-588 / NCTC 13252 / RB50) (Alcaligenes bronchisepticus).